The following is a 238-amino-acid chain: MEATQFQAMLEERGISLSSQALAQFERYYELLVEWNEKMNLTAITDKPGVYVKHFFDSVSPAFYYDFSEPFSLCDVGAGAGFPSIPLKICFPHLRVSIVDSLQKRIRFLQHLVGELGLKDIALYHDRAETFARQKGMRESFDVVTARAVARMPVLAELCLPLTKVGGTFLAMKAASAPEELKEGEKAIAVLGGEVTATETFMLPFEEGERTIIFVQKTKKTPARYPRKPGTPNKQPIQ.

Residues Gly-77, Phe-82, 128–129, and Arg-147 each bind S-adenosyl-L-methionine; that span reads AE. Positions 219 to 238 are disordered; sequence KKTPARYPRKPGTPNKQPIQ.

It belongs to the methyltransferase superfamily. RNA methyltransferase RsmG family.

It is found in the cytoplasm. Functionally, specifically methylates the N7 position of guanine in position 535 of 16S rRNA. The chain is Ribosomal RNA small subunit methyltransferase G from Geobacillus thermodenitrificans (strain NG80-2).